We begin with the raw amino-acid sequence, 157 residues long: UPF0756 membrane protein BH3161 (157 aa).

Helical transmembrane passes span 1-21 (MISQ…LAKN), 54-74 (LGVT…EIGF), 87-107 (WVAL…IDLL), and 117-137 (LVLG…GPLI).

The protein belongs to the UPF0756 family.

It localises to the cell membrane. This is UPF0756 membrane protein BH3161 from Halalkalibacterium halodurans (strain ATCC BAA-125 / DSM 18197 / FERM 7344 / JCM 9153 / C-125) (Bacillus halodurans).